Reading from the N-terminus, the 342-residue chain is Putative aryl-alcohol dehydrogenase AAD16 (342 aa).

Belongs to the aldo/keto reductase family. Aldo/keto reductase 2 subfamily.

In terms of biological role, putative aryl-alcohol dehydrogenase. This chain is Putative aryl-alcohol dehydrogenase AAD16, found in Saccharomyces cerevisiae (strain ATCC 204508 / S288c) (Baker's yeast).